An 880-amino-acid chain; its full sequence is DNA-directed RNA polymerase subunit beta C-terminal section (880 aa).

The protein belongs to the RNA polymerase beta chain family. As to quaternary structure, in plastids the minimal PEP RNA polymerase catalytic core is composed of four subunits: alpha, beta, beta', and beta''. When a (nuclear-encoded) sigma factor is associated with the core the holoenzyme is formed, which can initiate transcription.

Its subcellular location is the plastid. The protein resides in the chloroplast. The catalysed reaction is RNA(n) + a ribonucleoside 5'-triphosphate = RNA(n+1) + diphosphate. Its function is as follows. DNA-dependent RNA polymerase catalyzes the transcription of DNA into RNA using the four ribonucleoside triphosphates as substrates. This Pleurastrum terricola (Filamentous green alga) protein is DNA-directed RNA polymerase subunit beta C-terminal section (rpoB2).